Here is a 144-residue protein sequence, read N- to C-terminus: Large ribosomal subunit protein uL11 (144 aa).

Belongs to the universal ribosomal protein uL11 family. In terms of assembly, part of the ribosomal stalk of the 50S ribosomal subunit. Interacts with L10 and the large rRNA to form the base of the stalk. L10 forms an elongated spine to which L12 dimers bind in a sequential fashion forming a multimeric L10(L12)X complex. Post-translationally, one or more lysine residues are methylated.

Forms part of the ribosomal stalk which helps the ribosome interact with GTP-bound translation factors. This Marinomonas sp. (strain MWYL1) protein is Large ribosomal subunit protein uL11.